We begin with the raw amino-acid sequence, 394 residues long: 8-amino-7-oxononanoate synthase (394 aa).

Arg-21 is a substrate binding site. Gly-112–Tyr-113 provides a ligand contact to pyridoxal 5'-phosphate. His-137 contacts substrate. Pyridoxal 5'-phosphate-binding residues include Ser-183, His-211, and Thr-239. Lys-242 bears the N6-(pyridoxal phosphate)lysine mark. Position 358 (Thr-358) interacts with substrate.

The protein belongs to the class-II pyridoxal-phosphate-dependent aminotransferase family. BioF subfamily. As to quaternary structure, homodimer. Pyridoxal 5'-phosphate is required as a cofactor.

It catalyses the reaction 6-carboxyhexanoyl-[ACP] + L-alanine + H(+) = (8S)-8-amino-7-oxononanoate + holo-[ACP] + CO2. The protein operates within cofactor biosynthesis; biotin biosynthesis. Functionally, catalyzes the decarboxylative condensation of pimeloyl-[acyl-carrier protein] and L-alanine to produce 8-amino-7-oxononanoate (AON), [acyl-carrier protein], and carbon dioxide. The protein is 8-amino-7-oxononanoate synthase of Burkholderia cenocepacia (strain ATCC BAA-245 / DSM 16553 / LMG 16656 / NCTC 13227 / J2315 / CF5610) (Burkholderia cepacia (strain J2315)).